A 171-amino-acid chain; its full sequence is Large ribosomal subunit protein bL9 (171 aa).

This sequence belongs to the bacterial ribosomal protein bL9 family.

Functionally, binds to the 23S rRNA. The sequence is that of Large ribosomal subunit protein bL9 from Rickettsia felis (strain ATCC VR-1525 / URRWXCal2) (Rickettsia azadi).